Here is a 216-residue protein sequence, read N- to C-terminus: Adenylate kinase (216 aa).

Residue 10-15 participates in ATP binding; sequence GAGKGT. The tract at residues 30–59 is NMP; the sequence is STGDIFRANIKEKTPLGIEAKRYMDNGQLV. Residues T31, R36, 57 to 59, 85 to 88, and Q92 contribute to the AMP site; these read QLV and GFPR. Positions 126–163 are LID; the sequence is GRRVCTSCGASYHIRFNPPKIEGKCDICDNELIQRKDD. R127 is a binding site for ATP. 2 residues coordinate Zn(2+): C130 and C133. 136 to 137 is an ATP binding site; sequence SY. Zn(2+) contacts are provided by C150 and C153. AMP contacts are provided by R160 and R171. E199 serves as a coordination point for ATP.

Belongs to the adenylate kinase family. In terms of assembly, monomer.

The protein resides in the cytoplasm. The catalysed reaction is AMP + ATP = 2 ADP. The protein operates within purine metabolism; AMP biosynthesis via salvage pathway; AMP from ADP: step 1/1. Its function is as follows. Catalyzes the reversible transfer of the terminal phosphate group between ATP and AMP. Plays an important role in cellular energy homeostasis and in adenine nucleotide metabolism. In Clostridium botulinum (strain Loch Maree / Type A3), this protein is Adenylate kinase.